Reading from the N-terminus, the 97-residue chain is Co-chaperonin GroES (97 aa).

This sequence belongs to the GroES chaperonin family. As to quaternary structure, heptamer of 7 subunits arranged in a ring. Interacts with the chaperonin GroEL.

Its subcellular location is the cytoplasm. Together with the chaperonin GroEL, plays an essential role in assisting protein folding. The GroEL-GroES system forms a nano-cage that allows encapsulation of the non-native substrate proteins and provides a physical environment optimized to promote and accelerate protein folding. GroES binds to the apical surface of the GroEL ring, thereby capping the opening of the GroEL channel. In Yersinia enterocolitica serotype O:8 / biotype 1B (strain NCTC 13174 / 8081), this protein is Co-chaperonin GroES.